A 255-amino-acid chain; its full sequence is Homeobox protein Hox-D4 (255 aa).

The interval Glu31 to Lys128 is disordered. The span at Glu94–Gly109 shows a compositional bias: pro residues. The short motif at Val133 to Lys138 is the Antp-type hexapeptide element. Positions Pro154–His213 form a DNA-binding region, homeobox. The interval Asp212 to Leu255 is disordered. Positions Ser222–Ser234 are enriched in low complexity. The span at Ala245–Leu255 shows a compositional bias: basic and acidic residues.

Belongs to the Antp homeobox family. Deformed subfamily. As to quaternary structure, forms a DNA-binding heterodimer with transcription factor PBX1.

The protein resides in the nucleus. Functionally, sequence-specific transcription factor which is part of a developmental regulatory system that provides cells with specific positional identities on the anterior-posterior axis. The sequence is that of Homeobox protein Hox-D4 (HOXD4) from Gorilla gorilla gorilla (Western lowland gorilla).